A 354-amino-acid chain; its full sequence is Homeobox-leucine zipper protein HOX27 (354 aa).

Residues 98–175 (SVAAGAPGME…DDEGASARKK (78 aa)) form a disordered region. Positions 148-157 (QGGGGGGGGE) are enriched in gly residues. The homeobox DNA-binding region spans 171 to 230 (SARKKLRLSKEQSAFLEESFKEHSTLNPKQKVALAKQLNLRPRQVEVWFQNRRARTKLKQ). A leucine-zipper region spans residues 229–273 (KQTEVDCEYLKRCCETLTEENRRLHKELAELRALKTARPFYMHLP). Residues 294 to 323 (STSAPAAATSPAAAPTAAARTAVASPEPHR) are disordered.

The protein belongs to the HD-ZIP homeobox family. Class II subfamily. Expressed in seedlings, roots, stems, leaf sheaths and blades and panicles.

The protein resides in the nucleus. Its function is as follows. Probable transcription factor. This Oryza sativa subsp. indica (Rice) protein is Homeobox-leucine zipper protein HOX27 (HOX27).